The sequence spans 323 residues: uncharacterized protein (323 aa).

Disordered regions lie at residues 185–214 (AELMKSEDSPEKDEETLRREERKQKEGSSW) and 271–294 (GNIISQKDNPPKSDSDDEDDYEKL).

It belongs to the IGBP1/TAP42 family.

This is an uncharacterized protein from Schizosaccharomyces pombe (strain 972 / ATCC 24843) (Fission yeast).